Consider the following 118-residue polypeptide: Hydrogenase maturation factor HypA (118 aa).

H2 serves as a coordination point for Ni(2+). Zn(2+) contacts are provided by C73, C76, C89, and C92.

Belongs to the HypA/HybF family.

Functionally, involved in the maturation of [NiFe] hydrogenases. Required for nickel insertion into the metal center of the hydrogenase. This Shewanella oneidensis (strain ATCC 700550 / JCM 31522 / CIP 106686 / LMG 19005 / NCIMB 14063 / MR-1) protein is Hydrogenase maturation factor HypA.